Reading from the N-terminus, the 183-residue chain is Macro domain-containing protein (183 aa).

Residues Met1 to Asp174 form the Macro domain.

Belongs to the MacroD-type family.

This chain is Macro domain-containing protein, found in Acinetobacter sp. (strain ED45-25).